The chain runs to 387 residues: Putative F-box protein At1g47800 (387 aa).

The region spanning 8–54 (LQSLDHIPIDVLFEILVKLPAKSVARFLCVSKVWATMIRGEVFIRSF) is the F-box domain.

In Arabidopsis thaliana (Mouse-ear cress), this protein is Putative F-box protein At1g47800.